The sequence spans 738 residues: MEHTYQYAWVIPLLPLPVIMSMGFGLFLIPTATKNLRRIWAFPSILLLSIAMVFSLHLSIQQINGSSIYQYLWSWTINNDFSLEFGYLVDPLTSIMLILITTVGILVLIYSDDYMSHDEGYLRFFVYISFFNTSMLGLVTSSNLIQIYFFWELVGMCSYLLIGFWFTRPIAASACQKAFVTNRVGDFGLLLGILGFFWITGSLEFRDLFKIANNWIPNNGINSLLTTLCAFLLFLGAVAKSAQFPLHVWLPDAMEGPTPISALIHAATMVAAGIFLLARLLPLFISLPWIMSFISLIGTITLFLGATLALAQRDIKRSLAYSTMSQLGYMMLALGIGSYQAALFHLITHAYSKALLFLGSGSVIHSMEPLVGYSPDKSQNMVLMGGLRKYVPITRTTFLCGTLSLCGIPPLACFWSKDEILSNSWLYSPFFGIIASFTAGLTAFYMFRIYLLTFDGYLRVHFQNYSSTKEGSLYSISLWGKSISKGVNRDFVLSTMKSGVSFFSQNIPKIPANTRNKIGSFSTPFGAKNTFVYPHETGNTMLFPLLILLLFTLFIGSIGIHFDNGVKDNRILELTILSKWLTPSINLFQENSNSSINSYEFLTNAISSVSLAIFGLFIAYIFYGSAYSFFQNLNFQNSLVKKNPKKSFLDEVKKKIYSWSYNRGYIDFFYTRVFILGIRKLAELTHFFDKGVIDGITNGVGLAGFCIGEEIKYVGGGRISSYLFFFLCYVSLFLFFIP.

A run of 17 helical transmembrane segments spans residues 9–29, 39–59, 89–109, 125–145, 147–167, 185–205, 219–239, 258–278, 280–300, 327–347, 354–374, 396–416, 425–445, 542–562, 610–630, 691–711, and 717–737; these read WVIP…LFLI, IWAF…LHLS, VDPL…LVLI, FVYI…SNLI, IYFF…FWFT, GDFG…SLEF, NGIN…GAVA, TPIS…FLLA, LLPL…IGTI, LGYM…FHLI, ALLF…VGYS, TTFL…CFWS, WLYS…TAFY, LFPL…GIHF, SLAI…YSFF, GVID…GEEI, and GRIS…LFFI.

This sequence belongs to the complex I subunit 5 family. NDH is composed of at least 16 different subunits, 5 of which are encoded in the nucleus.

Its subcellular location is the plastid. It localises to the chloroplast thylakoid membrane. It carries out the reaction a plastoquinone + NADH + (n+1) H(+)(in) = a plastoquinol + NAD(+) + n H(+)(out). The enzyme catalyses a plastoquinone + NADPH + (n+1) H(+)(in) = a plastoquinol + NADP(+) + n H(+)(out). Its function is as follows. NDH shuttles electrons from NAD(P)H:plastoquinone, via FMN and iron-sulfur (Fe-S) centers, to quinones in the photosynthetic chain and possibly in a chloroplast respiratory chain. The immediate electron acceptor for the enzyme in this species is believed to be plastoquinone. Couples the redox reaction to proton translocation, and thus conserves the redox energy in a proton gradient. The sequence is that of NAD(P)H-quinone oxidoreductase subunit 5, chloroplastic (ndhF) from Zea mays (Maize).